The sequence spans 337 residues: Holliday junction branch migration complex subunit RuvB (337 aa).

The tract at residues 1-27 (MIEADRLVHAQPQGTEERDEQIDRAMR) is disordered. Positions 4-187 (ADRLVHAQPQ…FGIPLRLEFY (184 aa)) are large ATPase domain (RuvB-L). Residues Arg-27, Gly-68, Lys-71, Thr-72, Thr-73, 134–136 (EDY), Arg-177, Tyr-187, and Arg-224 contribute to the ATP site. Thr-72 contacts Mg(2+). The interval 188 to 258 (NVKDLSSIVT…VAESALDMLD (71 aa)) is small ATPAse domain (RuvB-S). Positions 261–337 (VEGFDYMDRK…YQHFNLIQPE (77 aa)) are head domain (RuvB-H). The DNA site is built by Arg-297, Arg-316, and Arg-321.

This sequence belongs to the RuvB family. Homohexamer. Forms an RuvA(8)-RuvB(12)-Holliday junction (HJ) complex. HJ DNA is sandwiched between 2 RuvA tetramers; dsDNA enters through RuvA and exits via RuvB. An RuvB hexamer assembles on each DNA strand where it exits the tetramer. Each RuvB hexamer is contacted by two RuvA subunits (via domain III) on 2 adjacent RuvB subunits; this complex drives branch migration. In the full resolvosome a probable DNA-RuvA(4)-RuvB(12)-RuvC(2) complex forms which resolves the HJ.

It is found in the cytoplasm. It carries out the reaction ATP + H2O = ADP + phosphate + H(+). Functionally, the RuvA-RuvB-RuvC complex processes Holliday junction (HJ) DNA during genetic recombination and DNA repair, while the RuvA-RuvB complex plays an important role in the rescue of blocked DNA replication forks via replication fork reversal (RFR). RuvA specifically binds to HJ cruciform DNA, conferring on it an open structure. The RuvB hexamer acts as an ATP-dependent pump, pulling dsDNA into and through the RuvAB complex. RuvB forms 2 homohexamers on either side of HJ DNA bound by 1 or 2 RuvA tetramers; 4 subunits per hexamer contact DNA at a time. Coordinated motions by a converter formed by DNA-disengaged RuvB subunits stimulates ATP hydrolysis and nucleotide exchange. Immobilization of the converter enables RuvB to convert the ATP-contained energy into a lever motion, pulling 2 nucleotides of DNA out of the RuvA tetramer per ATP hydrolyzed, thus driving DNA branch migration. The RuvB motors rotate together with the DNA substrate, which together with the progressing nucleotide cycle form the mechanistic basis for DNA recombination by continuous HJ branch migration. Branch migration allows RuvC to scan DNA until it finds its consensus sequence, where it cleaves and resolves cruciform DNA. This Shewanella loihica (strain ATCC BAA-1088 / PV-4) protein is Holliday junction branch migration complex subunit RuvB.